A 249-amino-acid chain; its full sequence is Ubiquinone/menaquinone biosynthesis C-methyltransferase UbiE (249 aa).

Residues Thr72, Asp93, and 121-122 (DA) contribute to the S-adenosyl-L-methionine site.

This sequence belongs to the class I-like SAM-binding methyltransferase superfamily. MenG/UbiE family.

The enzyme catalyses a 2-demethylmenaquinol + S-adenosyl-L-methionine = a menaquinol + S-adenosyl-L-homocysteine + H(+). It carries out the reaction a 2-methoxy-6-(all-trans-polyprenyl)benzene-1,4-diol + S-adenosyl-L-methionine = a 5-methoxy-2-methyl-3-(all-trans-polyprenyl)benzene-1,4-diol + S-adenosyl-L-homocysteine + H(+). Its pathway is quinol/quinone metabolism; menaquinone biosynthesis; menaquinol from 1,4-dihydroxy-2-naphthoate: step 2/2. It functions in the pathway cofactor biosynthesis; ubiquinone biosynthesis. Its function is as follows. Methyltransferase required for the conversion of demethylmenaquinol (DMKH2) to menaquinol (MKH2) and the conversion of 2-polyprenyl-6-methoxy-1,4-benzoquinol (DDMQH2) to 2-polyprenyl-3-methyl-6-methoxy-1,4-benzoquinol (DMQH2). In Saccharophagus degradans (strain 2-40 / ATCC 43961 / DSM 17024), this protein is Ubiquinone/menaquinone biosynthesis C-methyltransferase UbiE.